The chain runs to 141 residues: Sec-independent protein translocase protein TatB (141 aa).

Residues 1 to 21 (MFGISFSELLLVGLVALLVLG) traverse the membrane as a helical segment. Residues 74–141 (EAQKLLAPLT…SPPSETPRNP (68 aa)) are disordered. Residues 89–115 (QETPPPAAESPAPSVPTPPPTSTPAVP) are compositionally biased toward pro residues. Positions 116–129 (PADAAAPPAVAAST) are enriched in low complexity. The span at 130–141 (PPSPPSETPRNP) shows a compositional bias: pro residues.

Belongs to the TatB family. In terms of assembly, the Tat system comprises two distinct complexes: a TatABC complex, containing multiple copies of TatA, TatB and TatC subunits, and a separate TatA complex, containing only TatA subunits. Substrates initially bind to the TatABC complex, which probably triggers association of the separate TatA complex to form the active translocon.

Its subcellular location is the cell inner membrane. In terms of biological role, part of the twin-arginine translocation (Tat) system that transports large folded proteins containing a characteristic twin-arginine motif in their signal peptide across membranes. Together with TatC, TatB is part of a receptor directly interacting with Tat signal peptides. TatB may form an oligomeric binding site that transiently accommodates folded Tat precursor proteins before their translocation. The chain is Sec-independent protein translocase protein TatB from Pseudomonas aeruginosa (strain ATCC 15692 / DSM 22644 / CIP 104116 / JCM 14847 / LMG 12228 / 1C / PRS 101 / PAO1).